Reading from the N-terminus, the 475-residue chain is Tubulin gamma chain (475 aa).

A GTP-binding site is contributed by 142–148 (AGGTGSG). Positions 455 to 475 (GKQVSGEGNTSGTVDSRVGAS) are disordered.

It belongs to the tubulin family.

It localises to the cytoplasm. The protein localises to the cytoskeleton. Its subcellular location is the microtubule organizing center. Tubulin is the major constituent of microtubules. The gamma chain is found at microtubule organizing centers (MTOC) such as the spindle poles, suggesting that it is involved in the minus-end nucleation of microtubule assembly. The polypeptide is Tubulin gamma chain (TUBG1) (Physcomitrium patens (Spreading-leaved earth moss)).